We begin with the raw amino-acid sequence, 237 residues long: Orotidine 5'-phosphate decarboxylase (237 aa).

Substrate is bound by residues Asp-11, Lys-34, 61–70, Thr-124, Arg-186, Gln-195, Gly-215, and Arg-216; that span reads DLKLHDIPNT. The active-site Proton donor is Lys-63.

The protein belongs to the OMP decarboxylase family. Type 1 subfamily. As to quaternary structure, homodimer.

It carries out the reaction orotidine 5'-phosphate + H(+) = UMP + CO2. It functions in the pathway pyrimidine metabolism; UMP biosynthesis via de novo pathway; UMP from orotate: step 2/2. In terms of biological role, catalyzes the decarboxylation of orotidine 5'-monophosphate (OMP) to uridine 5'-monophosphate (UMP). This Lactococcus lactis subsp. cremoris (strain SK11) protein is Orotidine 5'-phosphate decarboxylase.